We begin with the raw amino-acid sequence, 551 residues long: Methionine--tRNA ligase (551 aa).

A 'HIGH' region motif is present at residues 12-22 (PYANGPLHFGH). Zn(2+)-binding residues include Cys144, Cys147, Cys157, and Cys160. The 'KMSKS' region signature appears at 330–334 (QFSKS). Lys333 is an ATP binding site.

Belongs to the class-I aminoacyl-tRNA synthetase family. MetG type 1 subfamily. Monomer. Zn(2+) is required as a cofactor.

It localises to the cytoplasm. It catalyses the reaction tRNA(Met) + L-methionine + ATP = L-methionyl-tRNA(Met) + AMP + diphosphate. Functionally, is required not only for elongation of protein synthesis but also for the initiation of all mRNA translation through initiator tRNA(fMet) aminoacylation. The protein is Methionine--tRNA ligase (metG) of Chlamydia pneumoniae (Chlamydophila pneumoniae).